Reading from the N-terminus, the 140-residue chain is Ribonucleases P/MRP protein subunit POP7 (140 aa).

The tract at residues 1-21 is disordered; sequence MALKKNTHNKSTKRVTKHPSL. Serine 115 is subject to Phosphoserine.

It belongs to the histone-like Alba family. As to quaternary structure, component of nuclear RNase P and RNase MRP complexes. RNase P consists of an RNA moiety and at least 9 protein subunits including POP1, POP3, POP4, POP5, POP6, POP7, POP8, RPP1 and RPR2. RNase MRP complex consists of an RNA moiety and at least 10 protein subunits including POP1, POP3, POP4, POP5, POP6, POP7, POP8, RMP1, RPP1 and SNM1, many of which are shared with the RNase P complex.

The protein localises to the nucleus. The catalysed reaction is Endonucleolytic cleavage of RNA, removing 5'-extranucleotides from tRNA precursor.. Functionally, component of ribonuclease P, a protein complex that generates mature tRNA molecules by cleaving their 5'-ends. Also a component of RNase MRP, which cleaves pre-rRNA sequences. The chain is Ribonucleases P/MRP protein subunit POP7 (POP7) from Saccharomyces cerevisiae (strain ATCC 204508 / S288c) (Baker's yeast).